The following is a 416-amino-acid chain: MSLSNKLSITDLALTGKRVLIRVDFNSPIQDGKITNPARINAALPTIKYALDNGASKVILMSHLGRPDGKAISKYSLKPVASELEKLLKKPVFFLHDCVGPDIEKAVLEAPEGAVVLLENLRFHIEEEGSAKNEEGKKIKADPSKVTQFREQLTRLGDVYVNDAFGTAHRAHSSMVGIKLPRRASGFLVKKELDYFAKALENPERPFLAILGGAKVSDKIQLIENMLDKVNCLVIGGGMAFTFKKTMQNVAIGNSLFDKPGSEKVAGIVEKAKKNNVEIVFPVDYVVGDKFDANANHKIVTDDEGVPDGWMGLDVGPKSNELFREAVLKAKTILWNGPPGVFEFPAFAKGSKVLLDATVEAVQKGATVIVGGGDTATVVANHDAEEKLSHVSTGGGASLELLEGKTLPGVAELSNK.

(2R)-3-phosphoglycerate is bound by residues Val23, Asp24, Phe25, Asn26, Arg39, Ser62, His63, Gly65, Arg66, Leu121, Arg122, His169, and Arg170. An ADP-binding site is contributed by Gly213. A CDP-binding site is contributed by Gly213. The AMP site is built by Ala214 and Lys215. Residue Ala214 participates in ATP binding. Mg(2+) is bound at residue Ala214. Residue Asp218 participates in CDP binding. Asp218 contacts Mg(2+). Lys219 serves as a coordination point for AMP. Lys219 lines the ATP pocket. Gly237 contacts ADP. Gly237 lines the CDP pocket. Gly238 and Gly312 together coordinate AMP. ATP-binding residues include Gly238 and Gly312. Residues Gly337 and Phe342 each coordinate CDP. Phe342 is an ADP binding site. Residue Glu343 coordinates AMP. ATP-binding residues include Glu343, Asp374, and Thr375. Mg(2+) is bound at residue Asp374.

It belongs to the phosphoglycerate kinase family. In terms of assembly, monomer. Requires Mg(2+) as cofactor.

It localises to the cytoplasm. The protein localises to the mitochondrion. The catalysed reaction is (2R)-3-phosphoglycerate + ATP = (2R)-3-phospho-glyceroyl phosphate + ADP. The protein operates within carbohydrate degradation; glycolysis; pyruvate from D-glyceraldehyde 3-phosphate: step 2/5. Its function is as follows. Catalyzes one of the two ATP producing reactions in the glycolytic pathway via the reversible conversion of 1,3-diphosphoglycerate to 3-phosphoglycerate. Both L- and D- forms of purine and pyrimidine nucleotides can be used as substrates, but the activity is much lower on pyrimidines. Negatively regulates the biosynthesis of acetyl-CoA from pyruvate in the mitochondrion. The sequence is that of Phosphoglycerate kinase (pgkA) from Agaricus bisporus (White button mushroom).